We begin with the raw amino-acid sequence, 167 residues long: I-Kappa-B like protein F2 (167 aa).

3 ANK repeats span residues 54–86 (HGKQCVHIVSNPGIADPQEKLKLLMEWGADING), 91–121 (FGNTPLHIAAYTQNHKLATWLCNQPGINMGI), and 125–154 (LFKTPYYVACERHDLKIMNILRAKGTRCGV).

This sequence belongs to the polydnaviridae I-Kappa-B-like protein family.

Suppresses the host immune response through NF-kappa-B inactivation. Possesses ankyrin repeat domains required for NF-kappa-B binding but lacks the regulatory regions required for dissociation from NF-kappa-B and degradation. Therefore, prevents host NF-kappa-B release and subsequent activation. The polypeptide is I-Kappa-B like protein F2 (F3) (Microplitis demolitor bracovirus (isolate Webb) (MdBV)).